Consider the following 353-residue polypeptide: Photosystem II D2 protein (353 aa).

At threonine 2 the chain carries N-acetylthreonine. A Phosphothreonine modification is found at threonine 2. A helical membrane pass occupies residues 41–61; sequence CAYFALGGWFTGTTFVTSWYT. Histidine 118 serves as a coordination point for chlorophyll a. The chain crosses the membrane as a helical span at residues 125 to 141; it reads GFMLRQFELARSVQLRP. Pheophytin a contacts are provided by glutamine 130 and asparagine 143. A helical transmembrane segment spans residues 153–166; sequence VFVSVFLIYPLGQS. Histidine 198 provides a ligand contact to chlorophyll a. A helical transmembrane segment spans residues 208-228; sequence AALLCAIHGATVENTLFEDGD. A plastoquinone is bound by residues histidine 215 and phenylalanine 262. Histidine 215 contributes to the Fe cation binding site. Residue histidine 269 coordinates Fe cation. The chain crosses the membrane as a helical span at residues 279 to 295; it reads GLWMSALGVVGLALNLR.

It belongs to the reaction center PufL/M/PsbA/D family. PSII is composed of 1 copy each of membrane proteins PsbA, PsbB, PsbC, PsbD, PsbE, PsbF, PsbH, PsbI, PsbJ, PsbK, PsbL, PsbM, PsbT, PsbX, PsbY, PsbZ, Psb30/Ycf12, at least 3 peripheral proteins of the oxygen-evolving complex and a large number of cofactors. It forms dimeric complexes. The D1/D2 heterodimer binds P680, chlorophylls that are the primary electron donor of PSII, and subsequent electron acceptors. It shares a non-heme iron and each subunit binds pheophytin, quinone, additional chlorophylls, carotenoids and lipids. There is also a Cl(-1) ion associated with D1 and D2, which is required for oxygen evolution. The PSII complex binds additional chlorophylls, carotenoids and specific lipids. is required as a cofactor.

The protein localises to the plastid. Its subcellular location is the chloroplast thylakoid membrane. The enzyme catalyses 2 a plastoquinone + 4 hnu + 2 H2O = 2 a plastoquinol + O2. In terms of biological role, photosystem II (PSII) is a light-driven water:plastoquinone oxidoreductase that uses light energy to abstract electrons from H(2)O, generating O(2) and a proton gradient subsequently used for ATP formation. It consists of a core antenna complex that captures photons, and an electron transfer chain that converts photonic excitation into a charge separation. The D1/D2 (PsbA/PsbD) reaction center heterodimer binds P680, the primary electron donor of PSII as well as several subsequent electron acceptors. D2 is needed for assembly of a stable PSII complex. The sequence is that of Photosystem II D2 protein from Chloranthus spicatus (Chulantree).